Consider the following 395-residue polypeptide: Cytoplasmic 60S subunit biogenesis factor REI1 homolog 2 (395 aa).

C2H2-type zinc fingers lie at residues 4–28, 68–92, 171–194, and 222–249; these read LACN…SEWH, YSCG…SKSH, ACCL…HKFH, and FVCL…AKGH.

This sequence belongs to the REI1 family. As to quaternary structure, can form homodimer. Interacts with RLP24, RLP24A, RPL24B, EBP1 and JJJ1.

The protein localises to the cytoplasm. Pre-60S-associated factor involved in the cytoplasmic maturation of the 60S subunit. Involved in the dissociation and recycling of other late pre-60S factors before newly synthesized large ribosomal subunits enter translation. Can complement the growth defect of a yeast mutant lacking REI1. Required for leaf growth under cold temperature conditions. In Arabidopsis thaliana (Mouse-ear cress), this protein is Cytoplasmic 60S subunit biogenesis factor REI1 homolog 2.